A 102-amino-acid polypeptide reads, in one-letter code: uncharacterized protein (102 aa).

This is an uncharacterized protein from Escherichia coli (strain K12).